A 136-amino-acid chain; its full sequence is Urease subunit beta (136 aa).

Belongs to the urease beta subunit family. In terms of assembly, heterotrimer of UreA (gamma), UreB (beta) and UreC (alpha) subunits. Three heterotrimers associate to form the active enzyme.

It is found in the cytoplasm. The enzyme catalyses urea + 2 H2O + H(+) = hydrogencarbonate + 2 NH4(+). Its pathway is nitrogen metabolism; urea degradation; CO(2) and NH(3) from urea (urease route): step 1/1. In Staphylococcus aureus (strain Mu3 / ATCC 700698), this protein is Urease subunit beta.